A 261-amino-acid polypeptide reads, in one-letter code: Dienlactone hydrolase 1 (261 aa).

Catalysis depends on residues cysteine 147, aspartate 194, and histidine 226.

It belongs to the dienelactone hydrolase family.

It functions in the pathway xenobiotic degradation. Dienlactone hydrolase; part of the Fusarium detoxification of benzoxazolinone cluster 1 (FDB1) involved in the degradation of benzoxazolinones produced by the host plant. Maize, wheat, and rye produce the 2 benzoxazinone phytoanticipins 2,4-dihy-droxy-7-methoxy-1,4-benzoxazin-3-one (DIMBOA) and 2,4-dihydroxy-1,4-benzoxazin-3-one (DIBOA) that, due to their inherent instability once released, spontaneously degrade to the more stable corresponding benzoxazolinones, 6-methoxy-2-benzoxazolinone (MBOA) and 2-benzoxazolinone (BOA), respectively. The first step in the detoxification of benzoxazolinones involves the hydrolysis of the cyclic ester bond of benzoxazolinones by the FDB1 cluster gamma-lactamase MBL1 to aminophenols. MBL1 is able to convert BOA into 2-aminophenol (2-AP), as well as MBOA into 5-methoxy-2-aminophenol (2-AMP). The FDB2 cluster N-malonyltransferase FDB2/NAT1 then metabolizes aminophenols via N-malonylation to non-toxic malonamic acids. FDB2/NAT1 converts 2-AP into N-(2-hydroxyphenyl) malonamic acid (HPMA) and 2-AMP into N-(2-hydroxy-4-methoxyphenyl) malonamic acid (HMPMA). The duplicated dienlactone hydrolases DLH1 and DLH2 may provide redundant function for hydrolyzing the lactone moiety in the BOA molecule. The roles of the amidases and other enzymes encoded by the 2 FDB clusters have not been identified so far. The chain is Dienlactone hydrolase 1 from Gibberella moniliformis (strain M3125 / FGSC 7600) (Maize ear and stalk rot fungus).